A 179-amino-acid chain; its full sequence is ATP-dependent protease subunit HslV (179 aa).

Thr5 is an active-site residue. Na(+) contacts are provided by Gly164, Cys167, and Thr170.

This sequence belongs to the peptidase T1B family. HslV subfamily. A double ring-shaped homohexamer of HslV is capped on each side by a ring-shaped HslU homohexamer. The assembly of the HslU/HslV complex is dependent on binding of ATP.

The protein resides in the cytoplasm. It carries out the reaction ATP-dependent cleavage of peptide bonds with broad specificity.. With respect to regulation, allosterically activated by HslU binding. Protease subunit of a proteasome-like degradation complex believed to be a general protein degrading machinery. The chain is ATP-dependent protease subunit HslV from Verminephrobacter eiseniae (strain EF01-2).